A 309-amino-acid chain; its full sequence is MDKHIPVLLDESIKYLNIKLNGIYVDCTLGRAGHASEILKRLSQNGFLYAIDQDKTAIGQAKEKLEKISNNFFLIQGNFSNLSALLAINHIFSVDGILYDLGVSSPQLDIGSRGFSYRIDGPLDMRMDITNNNLTADTIINQYSETQIEDILFKYGEESFAKSIAKKIVLSRPINSTLQLVEVIKSALPQKVLKQKKHPAKKTFQALRIFINNELIVLENSLKQALDLLNSKGRICVITFHSLEEKIVKNIFNSSTNYFQEQLFNNLPIKANLNSQFKLVIKKPIKPSLLELENNHRSHSAKLWVIEKN.

Residues 32–34 (AGH), aspartate 52, phenylalanine 79, aspartate 100, and glutamine 107 each bind S-adenosyl-L-methionine.

Belongs to the methyltransferase superfamily. RsmH family.

Its subcellular location is the cytoplasm. It catalyses the reaction cytidine(1402) in 16S rRNA + S-adenosyl-L-methionine = N(4)-methylcytidine(1402) in 16S rRNA + S-adenosyl-L-homocysteine + H(+). Its function is as follows. Specifically methylates the N4 position of cytidine in position 1402 (C1402) of 16S rRNA. This is Ribosomal RNA small subunit methyltransferase H from Mycoplasma capricolum subsp. capricolum (strain California kid / ATCC 27343 / NCTC 10154).